The primary structure comprises 56 residues: Prokaryotic ubiquitin-like protein UBact (56 aa).

The disordered stretch occupies residues 1-56 (MPDQAQKTRPVGPGPSGGGEGPGSPKVEKPNTEELLKRMRKVDPDQAKRYRQRTGQ). A compositionally biased stretch (basic and acidic residues) spans 26–48 (KVEKPNTEELLKRMRKVDPDQAK). Residue Gln56 is modified to Deamidated glutamine. Residue Gln56 forms an Isoglutamyl lysine isopeptide (Gln-Lys) (interchain with K-? in acceptor proteins) linkage.

Belongs to the ubiquitin-like protein UBact family. In terms of processing, may be modified by deamidation of its C-terminal glutamine to glutamate by the adjacently encoded deamidase. This could be a prerequisite to the subsequent conjugation, as shown in the other prokaryotic ubiquitin-like protein Pup.

May function as a protein modifier covalently attached to lysine residues of substrate proteins. This may serve to target the modified proteins for degradation by proteasomes. This chain is Prokaryotic ubiquitin-like protein UBact, found in Pedosphaera parvula (strain Ellin514).